A 73-amino-acid chain; its full sequence is Large ribosomal subunit protein bL28 (73 aa).

This sequence belongs to the bacterial ribosomal protein bL28 family.

The chain is Large ribosomal subunit protein bL28 from Buchnera aphidicola subsp. Cinara cedri (strain Cc).